The sequence spans 35 residues: Alpha-amanitin proprotein 2 (35 aa).

Positions 1-10 (MFDTNSTRLP) are excised as a propeptide. Ile11 bears the (3R,4R)-4,5-dihydroxyisoleucine; in form alpha-amanitin mark. Ile11 carries the post-translational modification (3R,4S)-4-hydroxyisoleucine; in form gamma-amanitin. A cross-link (cyclopeptide (Ile-Pro)) is located at residues 11-18 (IWGIGCNP). The 2'-cysteinyl-6'-hydroxytryptophan sulfoxide (Trp-Cys) cross-link spans 12–16 (WGIGC). Position 18 is a 4-hydroxyproline (Pro18). The propeptide occupies 19–35 (WTAEHVDQTLVSGNDIC).

This sequence belongs to the MSDIN fungal toxin family. In terms of processing, processed by the macrocyclase-peptidase enzyme POPB to yield a toxic bicyclic octapeptide. POPB first removes 10 residues from the N-terminus. Conformational trapping of the remaining peptide forces the enzyme to release this intermediate rather than proceed to macrocyclization. The enzyme rebinds the remaining peptide in a different conformation and catalyzes macrocyclization of the N-terminal 8 residues.

Major toxin belonging to the bicyclic octapeptides amatoxins that acts by binding non-competitively to RNA polymerase II and greatly slowing the elongation of transcripts from target promoters. In Galerina marginata (strain CBS 339.88), this protein is Alpha-amanitin proprotein 2.